The following is a 192-amino-acid chain: Large ribosomal subunit protein uL10 (192 aa).

Belongs to the universal ribosomal protein uL10 family. As to quaternary structure, part of the ribosomal stalk of the 50S ribosomal subunit. The N-terminus interacts with L11 and the large rRNA to form the base of the stalk. The C-terminus forms an elongated spine to which L12 dimers bind in a sequential fashion forming a multimeric L10(L12)X complex.

In terms of biological role, forms part of the ribosomal stalk, playing a central role in the interaction of the ribosome with GTP-bound translation factors. In Gloeobacter violaceus (strain ATCC 29082 / PCC 7421), this protein is Large ribosomal subunit protein uL10.